The chain runs to 396 residues: Probable sugar efflux transporter (396 aa).

Helical transmembrane passes span 15 to 35, 51 to 71, 84 to 104, 109 to 129, 137 to 157, 168 to 188, 209 to 229, 245 to 265, 276 to 296, 297 to 317, 333 to 353, and 365 to 385; these read VLIM…PVAM, GLMM…AMLA, LFII…FWIL, MCIA…VMRI, QALG…LPIG, VTFG…IRLL, PLLL…FTAY, NFAT…SLLF, FIVV…FSTE, TIIA…CIGL, VATA…ALFG, and IGYT…TTHL.

It belongs to the major facilitator superfamily. SotB (TC 2.A.1.2) family.

Its subcellular location is the cell inner membrane. In terms of biological role, involved in the efflux of sugars. The physiological role may be the reduction of the intracellular concentration of toxic sugars or sugar metabolites. The protein is Probable sugar efflux transporter of Haemophilus influenzae (strain PittGG).